The chain runs to 156 residues: Ribosomal RNA large subunit methyltransferase H (156 aa).

S-adenosyl-L-methionine contacts are provided by residues Gly-104 and 123-128 (LSALTL).

Belongs to the RNA methyltransferase RlmH family. As to quaternary structure, homodimer.

It localises to the cytoplasm. It catalyses the reaction pseudouridine(1915) in 23S rRNA + S-adenosyl-L-methionine = N(3)-methylpseudouridine(1915) in 23S rRNA + S-adenosyl-L-homocysteine + H(+). Functionally, specifically methylates the pseudouridine at position 1915 (m3Psi1915) in 23S rRNA. This is Ribosomal RNA large subunit methyltransferase H from Nitrosospira multiformis (strain ATCC 25196 / NCIMB 11849 / C 71).